Here is a 146-residue protein sequence, read N- to C-terminus: uncharacterized protein (146 aa).

Residues 7-146 (LQINYKTDEL…EGHDILIWNP (140 aa)) form the N-acetyltransferase domain.

This is an uncharacterized protein from Staphylococcus epidermidis (strain ATCC 12228 / FDA PCI 1200).